Consider the following 501-residue polypeptide: 4,4'-diapophytoene desaturase (4,4'-diaponeurosporene-forming) (501 aa).

5–17 contacts FAD; sequence VVGAGVTGLAAAA.

The protein belongs to the carotenoid/retinoid oxidoreductase family. CrtN subfamily.

The enzyme catalyses 15-cis-4,4'-diapophytoene + 3 FAD + 3 H(+) = all-trans-4,4'-diaponeurosporene + 3 FADH2. The protein operates within carotenoid biosynthesis; staphyloxanthin biosynthesis; staphyloxanthin from farnesyl diphosphate: step 2/5. Its function is as follows. Involved in the biosynthesis of the yellow-orange carotenoid staphyloxanthin, which plays a role in the virulence via its protective function against oxidative stress. Catalyzes three successive dehydrogenation reactions that lead to the introduction of three double bonds into 4,4'-diapophytoene (dehydrosqualene), with 4,4'-diapophytofluene and 4,4'-diapo-zeta-carotene as intermediates, and 4,4'-diaponeurosporene (the major deep-yellow pigment in staphylococci strains) as the end product. This chain is 4,4'-diapophytoene desaturase (4,4'-diaponeurosporene-forming), found in Staphylococcus haemolyticus (strain JCSC1435).